The primary structure comprises 326 residues: ELAV-like protein 1 (326 aa).

Ser2 is modified (N-acetylserine). At Ser2 the chain carries Phosphoserine. An RRM 1 domain is found at 20–98 (TNLIVNYLPQ…KTIKVSYARP (79 aa)). A phosphoserine mark is found at Ser100 and Ser158. Residues 106–186 (ANLYISGLPR…EPITVKFAAN (81 aa)) form the RRM 2 domain. Residue Lys191 forms a Glycyl lysine isopeptide (Lys-Gly) (interchain with G-Cter in SUMO2) linkage. Phosphoserine is present on residues Ser197 and Ser202. Omega-N-methylarginine is present on Arg206. Asymmetric dimethylarginine; by CARM1; alternate is present on Arg217. Arg217 bears the Omega-N-methylarginine; alternate mark. A phosphoserine mark is found at Ser221 and Ser318. The 79-residue stretch at 244 to 322 (WCIFIYNLGQ…KILQVSFKTN (79 aa)) folds into the RRM 3 domain.

The protein belongs to the RRM elav family. In terms of assembly, monomer and homodimer (in vitro). Interacts with ANP32A. Interacts with ZNF385A; the interaction is indirect and mRNA-dependent and may regulate p53/TP53 expression. Identified in a mRNP complex, at least composed of DHX9, DDX3X, ELAVL1, HNRNPU, IGF2BP1, ILF3, PABPC1, PCBP2, PTBP2, STAU1, STAU2, SYNCRIP and YBX1. Interacts with AGO1 and AGO2. Interacts with IGF2BP1; the interaction is enhanced by SEPIN14P20 peptide RBPR. Interacts with IGF2BP2 and IGF2BP3. Interacts with HNRNPL. Interacts with DHX36; this interaction occurs in a RNA-dependent manner. Interacts with ILF3; this interaction occurs in a RNA-dependent manner. Interacts with PLEKHN1. Interacts with SHFL; the interaction increases in presence of RNA. Interacts with YBX1; interaction recruits ELAVL1 on C5-methylcytosine (m5C)-containing mRNAs, thereby promoting mRNA stability. Interacts with FXR1. Post-translationally, phosphorylated by MAPKAPK2. Phosphorylated by PRKCD. Methylated at Arg-217 by CARM1 in macrophages in response to LPS challenge. Ubiquitous. Detected in brain, liver, thymus and muscle.

The protein localises to the cytoplasm. The protein resides in the nucleus. It localises to the stress granule. Its subcellular location is the P-body. In terms of biological role, RNA-binding protein that binds to the 3'-UTR region of mRNAs and increases their stability. Involved in embryonic stem cell (ESC) differentiation: preferentially binds mRNAs that are not methylated by N6-methyladenosine (m6A), stabilizing them, promoting ESC differentiation. Has also been shown to be capable of binding to m6A-containing mRNAs and contributes to MYC stability by binding to m6A-containing MYC mRNAs. Binds to poly-U elements and AU-rich elements (AREs) in the 3'-UTR of target mRNAs. Binds avidly to the AU-rich element in FOS and IL3/interleukin-3 mRNAs. In the case of the FOS AU-rich element, binds to a core element of 27 nucleotides that contain AUUUA, AUUUUA, and AUUUUUA motifs. Binds preferentially to the 5'-UUUU[AG]UUU-3' motif in vitro. With ZNF385A, binds the 3'-UTR of p53/TP53 mRNA to control their nuclear export induced by CDKN2A. Hence, may regulate p53/TP53 expression and mediate in part the CDKN2A anti-proliferative activity. May also bind with ZNF385A the CCNB1 mRNA. Increases the stability of the leptin mRNA harboring an AU-rich element (ARE) in its 3' UTR. In Homo sapiens (Human), this protein is ELAV-like protein 1 (ELAVL1).